Consider the following 271-residue polypeptide: 3-methyl-2-oxobutanoate hydroxymethyltransferase (271 aa).

Mg(2+) contacts are provided by Asp-53 and Asp-92. 3-methyl-2-oxobutanoate contacts are provided by residues 53 to 54 (DS), Asp-92, and Lys-120. Glu-122 lines the Mg(2+) pocket. Glu-189 acts as the Proton acceptor in catalysis.

Belongs to the PanB family. As to quaternary structure, homodecamer; pentamer of dimers. Mg(2+) serves as cofactor.

It localises to the cytoplasm. It carries out the reaction 3-methyl-2-oxobutanoate + (6R)-5,10-methylene-5,6,7,8-tetrahydrofolate + H2O = 2-dehydropantoate + (6S)-5,6,7,8-tetrahydrofolate. Its pathway is cofactor biosynthesis; (R)-pantothenate biosynthesis; (R)-pantoate from 3-methyl-2-oxobutanoate: step 1/2. In terms of biological role, catalyzes the reversible reaction in which hydroxymethyl group from 5,10-methylenetetrahydrofolate is transferred onto alpha-ketoisovalerate to form ketopantoate. This is 3-methyl-2-oxobutanoate hydroxymethyltransferase from Burkholderia mallei (strain NCTC 10247).